We begin with the raw amino-acid sequence, 250 residues long: MSGHSKWATIKRKKAVTDQKRGSLFTKLVKEITIAAKMGGGDPAGNPRLRLAIDTARDNSMPMDNIQRAIKKGTGELEGVTWDEITYEGYGPAGIALIIETATDNRNRTVADIRHIMSRNNGSLGESGSVAWMFQRKGTLDVPRSAAGEDQLMELLLEAGLEDLGSDDENYFTVITDVKDLERVKKALDDAAIMYENAKIDLIPENYIELEAEDARKVIKLIDAFENNDDVQAVYTNMEISESAMSSLNE.

This sequence belongs to the TACO1 family.

It is found in the cytoplasm. The protein is Probable transcriptional regulatory protein Ppha_0657 of Pelodictyon phaeoclathratiforme (strain DSM 5477 / BU-1).